Here is a 305-residue protein sequence, read N- to C-terminus: tRNA dimethylallyltransferase (305 aa).

An ATP-binding site is contributed by Gly8–Ser15. Thr10–Ser15 provides a ligand contact to substrate.

The protein belongs to the IPP transferase family. Monomer. The cofactor is Mg(2+).

The enzyme catalyses adenosine(37) in tRNA + dimethylallyl diphosphate = N(6)-dimethylallyladenosine(37) in tRNA + diphosphate. In terms of biological role, catalyzes the transfer of a dimethylallyl group onto the adenine at position 37 in tRNAs that read codons beginning with uridine, leading to the formation of N6-(dimethylallyl)adenosine (i(6)A). The sequence is that of tRNA dimethylallyltransferase from Mycobacterium sp. (strain KMS).